Reading from the N-terminus, the 285-residue chain is RNA polymerase sigma factor RpoH (285 aa).

A sigma-70 factor domain-2 region spans residues 53 to 122 (LILSHLRFVA…IHEYVLRNWR (70 aa)). The Interaction with polymerase core subunit RpoC motif lies at 77–80 (DLIQ). The segment at 229 to 281 (ALEGLDERSQHIIRARWLDDDNKSTLQELADQYGVSAERVRQLEKNAMKKLKM) is sigma-70 factor domain-4. A DNA-binding region (H-T-H motif) is located at residues 254–273 (LQELADQYGVSAERVRQLEK).

Belongs to the sigma-70 factor family. RpoH subfamily. Interacts with the RNA polymerase core enzyme.

It localises to the cytoplasm. Functionally, sigma factors are initiation factors that promote the attachment of RNA polymerase to specific initiation sites and are then released. This sigma factor is involved in regulation of expression of heat shock genes. This Serratia marcescens protein is RNA polymerase sigma factor RpoH.